Consider the following 456-residue polypeptide: Dual-specificity RNA methyltransferase RlmN (456 aa).

Residues 1 to 21 (MIQRHLGQPRLIQNGGDAGGV) are disordered. The active-site Proton acceptor is Glu-175. Positions 183 to 416 (DEERGAVCIS…QDAGYSAPIR (234 aa)) constitute a Radical SAM core domain. Cys-190 and Cys-427 form a disulfide bridge. Cys-197, Cys-201, and Cys-204 together coordinate [4Fe-4S] cluster. Residues 253 to 254 (GE), Ser-285, 307 to 309 (SLH), and Asn-384 each bind S-adenosyl-L-methionine. Residue Cys-427 is the S-methylcysteine intermediate of the active site.

The protein belongs to the radical SAM superfamily. RlmN family. Requires [4Fe-4S] cluster as cofactor.

The protein resides in the cytoplasm. The catalysed reaction is adenosine(2503) in 23S rRNA + 2 reduced [2Fe-2S]-[ferredoxin] + 2 S-adenosyl-L-methionine = 2-methyladenosine(2503) in 23S rRNA + 5'-deoxyadenosine + L-methionine + 2 oxidized [2Fe-2S]-[ferredoxin] + S-adenosyl-L-homocysteine. The enzyme catalyses adenosine(37) in tRNA + 2 reduced [2Fe-2S]-[ferredoxin] + 2 S-adenosyl-L-methionine = 2-methyladenosine(37) in tRNA + 5'-deoxyadenosine + L-methionine + 2 oxidized [2Fe-2S]-[ferredoxin] + S-adenosyl-L-homocysteine. Specifically methylates position 2 of adenine 2503 in 23S rRNA and position 2 of adenine 37 in tRNAs. m2A2503 modification seems to play a crucial role in the proofreading step occurring at the peptidyl transferase center and thus would serve to optimize ribosomal fidelity. This chain is Dual-specificity RNA methyltransferase RlmN, found in Paramagnetospirillum magneticum (strain ATCC 700264 / AMB-1) (Magnetospirillum magneticum).